The following is a 165-amino-acid chain: Ubiquitin D (165 aa).

Ubiquitin-like domains lie at 6 to 81 (SCLC…LKVV) and 90 to 163 (LFLV…CYCI).

It belongs to the ubiquitin D family. In terms of assembly, interacts directly with the 26S proteasome. Interacts with NUB1; this interaction facilitates the linking of UBD-conjugated target protein to the proteasome complex and accelerates its own degradation and that of its conjugates. Interacts (via ubiquitin-like 1 domain) with the spindle checkpoint protein MAD2L1 during mitosis. Present in aggresomes of proteasome inhibited cells. Interacts with HDAC6 under proteasome impairment conditions. Forms a thioester with UBA6 in cells stimulated with tumor necrosis factor-alpha (TNFa) and interferon-gamma (IFNg). Interacts with SQSTM1 and TP53/p53. Post-translationally, can be acetylated. In terms of tissue distribution, constitutively expressed in mature dendritic cells and B-cells. Mostly expressed in the reticuloendothelial system (e.g. thymus, spleen), the gastrointestinal system, kidney, lung and prostate gland.

It localises to the nucleus. The protein resides in the cytoplasm. Ubiquitin-like protein modifier which can be covalently attached to target proteins and subsequently leads to their degradation by the 26S proteasome, in a NUB1-dependent manner. Conjugation to the target protein is activated by UBA6 via adenylation of its C-terminal glycine. Promotes the expression of the proteasome subunit beta type-9 (PSMB9/LMP2). Regulates TNF-alpha-induced and LPS-mediated activation of the central mediator of innate immunity NF-kappa-B by promoting TNF-alpha-mediated proteasomal degradation of ubiquitinated-I-kappa-B-alpha. Required for TNF-alpha-induced p65 nuclear translocation in renal tubular epithelial cells (RTECs). May be involved in dendritic cell (DC) maturation, the process by which immature dendritic cells differentiate into fully competent antigen-presenting cells that initiate T-cell responses. Mediates mitotic non-disjunction and chromosome instability, in long-term in vitro culture and cancers, by abbreviating mitotic phase and impairing the kinetochore localization of MAD2L1 during the prometaphase stage of the cell cycle. May be involved in the formation of aggresomes when proteasome is saturated or impaired. Mediates apoptosis in a caspase-dependent manner, especially in renal epithelium and tubular cells during renal diseases such as polycystic kidney disease and Human immunodeficiency virus (HIV)-associated nephropathy (HIVAN). The sequence is that of Ubiquitin D (UBD) from Homo sapiens (Human).